Reading from the N-terminus, the 467-residue chain is MTPPRKLHIKSYGCQMNVYDAQRMVDTLGAEGFVETADAGDADLVILNTCHIREKASEKVYSELGRLRVAKEEAARSGRAMQIAVAGCVAQAEGVEIISRAPTVDVVVGPQSYHHLPQLLAQASRGERAIETEFPAEDKFGFLAKPSREAIRARGVSAFVTVQEGCDKFCTFCVVPYTRGAEMSRPVARIVDDVMQLTDSGVREITLIGQNVNAYHGEGPDGRTWTLGRLLYRIAEIPGVARIRYSTSHPNDVDDGLIAAHRDLTAVMPFVHLPVQSGSDRILAAMNRKHSAADYRRVVDRFRGARDDIAFSSDFIVGFPGETEEDFRATLALIDQIGYAAAYSFKYSPRPGTPAADMQEMVSATEMDERLERLQSLIDSQQAAFNKAAIGSVVDVLFEREARKPGQLVGRTAYLQPAHVMASSDIIGQVLPVRIDSLERYSLLGELVATTAAPIPEAAMPLASIGG.

The MTTase N-terminal domain maps to 5 to 125; that stretch reads RKLHIKSYGC…LPQLLAQASR (121 aa). Cysteine 14, cysteine 50, cysteine 88, cysteine 166, cysteine 170, and cysteine 173 together coordinate [4Fe-4S] cluster. The region spanning 152-384 is the Radical SAM core domain; sequence RARGVSAFVT…QSLIDSQQAA (233 aa). Residues 387–449 enclose the TRAM domain; that stretch reads KAAIGSVVDV…RYSLLGELVA (63 aa).

The protein belongs to the methylthiotransferase family. MiaB subfamily. Monomer. The cofactor is [4Fe-4S] cluster.

It is found in the cytoplasm. It catalyses the reaction N(6)-dimethylallyladenosine(37) in tRNA + (sulfur carrier)-SH + AH2 + 2 S-adenosyl-L-methionine = 2-methylsulfanyl-N(6)-dimethylallyladenosine(37) in tRNA + (sulfur carrier)-H + 5'-deoxyadenosine + L-methionine + A + S-adenosyl-L-homocysteine + 2 H(+). Catalyzes the methylthiolation of N6-(dimethylallyl)adenosine (i(6)A), leading to the formation of 2-methylthio-N6-(dimethylallyl)adenosine (ms(2)i(6)A) at position 37 in tRNAs that read codons beginning with uridine. The sequence is that of tRNA-2-methylthio-N(6)-dimethylallyladenosine synthase from Bradyrhizobium sp. (strain ORS 278).